The primary structure comprises 542 residues: Calcium/calmodulin-dependent protein kinase type II subunit beta (542 aa).

The Protein kinase domain occupies 14 to 272 (YQLYEDIGKG…AHEALKHPWV (259 aa)). A Phosphotyrosine modification is found at Tyr17. Residues 20 to 28 (IGKGAFSVV) and Lys43 contribute to the ATP site. Asp136 serves as the catalytic Proton acceptor. The segment at 283 to 292 (HRQETVECLK) is autoinhibitory domain. Thr287 is modified (phosphothreonine; by autocatalysis). A calmodulin-binding region spans residues 291 to 301 (LKKFNARRKLK). Phosphothreonine; by autocatalysis occurs at positions 306 and 307. Positions 349–407 (ADGVKPQTNSTKNSAAATSPKGTLPPAALEPQTTVIHNPVDGIKESSDSTHTTIEDEDT) are disordered. The segment covering 354-369 (PQTNSTKNSAAATSPK) has biased composition (polar residues). Residues Ser367, Ser394, and Ser397 each carry the phosphoserine modification. A phosphothreonine mark is found at Thr400 and Thr401.

This sequence belongs to the protein kinase superfamily. CAMK Ser/Thr protein kinase family. CaMK subfamily. As to quaternary structure, CAMK2 is composed of 4 different chains: alpha (CAMK2A), beta (CAMK2B), gamma (CAMK2G), and delta (CAMK2D). The different isoforms assemble into homo- or heteromultimeric holoenzymes composed of 12 subunits with two hexameric rings stacked one on top of the other. Interacts with SYNGAP1, CAMK2N2 and MPDZ. Interacts with FOXO3. Interacts (when in a kinase inactive state not associated with calmodulin) with ARC; leading to target ARC to inactive synapses. Interacts with CAMK2N1; this interaction requires CAMK2B activation by Ca(2+). Post-translationally, autophosphorylation of Thr-287 following activation by Ca(2+)/calmodulin. Phosphorylation of Thr-287 locks the kinase into an activated state.

Its subcellular location is the cytoplasm. It is found in the cytoskeleton. The protein resides in the microtubule organizing center. It localises to the centrosome. The protein localises to the sarcoplasmic reticulum membrane. Its subcellular location is the synapse. The catalysed reaction is L-seryl-[protein] + ATP = O-phospho-L-seryl-[protein] + ADP + H(+). It catalyses the reaction L-threonyl-[protein] + ATP = O-phospho-L-threonyl-[protein] + ADP + H(+). Activated by Ca(2+)/calmodulin. Binding of calmodulin results in conformational change that relieves intrasteric autoinhibition and allows autophosphorylation of Thr-287 which turns the kinase in a constitutively active form and confers to the kinase a Ca(2+)-independent activity. Its function is as follows. Calcium/calmodulin-dependent protein kinase that functions autonomously after Ca(2+)/calmodulin-binding and autophosphorylation, and is involved in dendritic spine and synapse formation, neuronal plasticity and regulation of sarcoplasmic reticulum Ca(2+) transport in skeletal muscle. In neurons, plays an essential structural role in the reorganization of the actin cytoskeleton during plasticity by binding and bundling actin filaments in a kinase-independent manner. This structural function is required for correct targeting of CaMK2A, which acts downstream of NMDAR to promote dendritic spine and synapse formation and maintain synaptic plasticity which enables long-term potentiation (LTP) and hippocampus-dependent learning. In developing hippocampal neurons, promotes arborization of the dendritic tree and in mature neurons, promotes dendritic remodeling. Also regulates the migration of developing neurons. Participates in the modulation of skeletal muscle function in response to exercise. In slow-twitch muscles, is involved in regulation of sarcoplasmic reticulum (SR) Ca(2+) transport and in fast-twitch muscle participates in the control of Ca(2+) release from the SR through phosphorylation of triadin, a ryanodine receptor-coupling factor, and phospholamban (PLN/PLB), an endogenous inhibitor of SERCA2A/ATP2A2. In response to interferon-gamma (IFN-gamma) stimulation, catalyzes phosphorylation of STAT1, stimulating the JAK-STAT signaling pathway. Phosphorylates reticulophagy regulator RETREG1 at 'Ser-147' under endoplasmic reticulum stress conditions which enhances RETREG1 oligomerization and its membrane scission and reticulophagy activity. This Bos taurus (Bovine) protein is Calcium/calmodulin-dependent protein kinase type II subunit beta (CAMK2B).